We begin with the raw amino-acid sequence, 168 residues long: 3-hydroxyacyl-[acyl-carrier-protein] dehydratase FabZ (168 aa).

Residue His-54 is part of the active site.

It belongs to the thioester dehydratase family. FabZ subfamily.

It localises to the cytoplasm. It catalyses the reaction a (3R)-hydroxyacyl-[ACP] = a (2E)-enoyl-[ACP] + H2O. Functionally, involved in unsaturated fatty acids biosynthesis. Catalyzes the dehydration of short chain beta-hydroxyacyl-ACPs and long chain saturated and unsaturated beta-hydroxyacyl-ACPs. This Yersinia enterocolitica serotype O:8 / biotype 1B (strain NCTC 13174 / 8081) protein is 3-hydroxyacyl-[acyl-carrier-protein] dehydratase FabZ.